The sequence spans 175 residues: Ferritin light chain (175 aa).

The residue at position 2 (serine 2) is an N-acetylserine. The region spanning 7–156 is the Ferritin-like diiron domain; sequence QNYSTEVEAA…DHLTNLRRLA (150 aa). 4 residues coordinate Fe cation: glutamate 54, glutamate 58, glutamate 61, and glutamate 64.

The protein belongs to the ferritin family. In terms of assembly, oligomer of 24 subunits. There are two types of subunits: L (light) chain and H (heavy) chain. The major chain can be light or heavy, depending on the species and tissue type. The functional molecule forms a roughly spherical shell with a diameter of 12 nm and contains a central cavity into which the insoluble mineral iron core is deposited. Interacts with NCOA4.

Its subcellular location is the cytoplasmic vesicle. The protein resides in the autophagosome. The protein localises to the cytoplasm. It localises to the autolysosome. Functionally, stores iron in a soluble, non-toxic, readily available form. Important for iron homeostasis. Iron is taken up in the ferrous form and deposited as ferric hydroxides after oxidation. Also plays a role in delivery of iron to cells. Mediates iron uptake in capsule cells of the developing kidney. Delivery to lysosomes by the cargo receptor NCOA4 for autophagic degradation and release or iron. This chain is Ferritin light chain (FTL), found in Bos taurus (Bovine).